Consider the following 230-residue polypeptide: Probable carboxylesterase Culp2 (230 aa).

Residues 1-32 (MNDLLTRRLLTMGAAAAMLAAVLLLTPITVPA) constitute a signal peptide (tat-type signal). A disulfide bridge links cysteine 45 with cysteine 112. Serine 123 functions as the Nucleophile in the catalytic mechanism. Cysteines 185 and 192 form a disulfide. The active site involves aspartate 189. Catalysis depends on histidine 207, which acts as the Proton donor/acceptor.

Belongs to the cutinase family. In terms of processing, predicted to be exported by the Tat system. The position of the signal peptide cleavage has not been experimentally proven.

It is found in the secreted. It localises to the cell surface. The polypeptide is Probable carboxylesterase Culp2 (cut2) (Mycobacterium bovis (strain ATCC BAA-935 / AF2122/97)).